Here is a 1013-residue protein sequence, read N- to C-terminus: RNA-binding protein 44 (1013 aa).

Disordered regions lie at residues 1 to 25 (MQATAALETDSDKNYPKNGGHFQND) and 56 to 94 (LATEERASDKENSIVDQRDLSELSFSENQDSNRGNIFSQ). Residues 56–76 (LATEERASDKENSIVDQRDLS) are compositionally biased toward basic and acidic residues. The segment covering 78-94 (LSFSENQDSNRGNIFSQ) has biased composition (polar residues). Residues S365, S368, S510, S681, and S688 each carry the phosphoserine modification. Positions 792–865 (FLIHVGGLCP…KSVTVRLVKI (74 aa)) constitute an RRM domain. The segment at 905-925 (RAKSRQLESEQDSEFPPLDQG) is disordered.

Homodimer. Interacts with TEX14. In terms of tissue distribution, highly expressed in testis. Also expressed in other tissues at lower level.

The protein resides in the cytoplasm. Its function is as follows. Component of intercellular bridges during meiosis. Intercellular bridges are evolutionarily conserved structures that connect differentiating germ cells. Not required for fertility. This is RNA-binding protein 44 (Rbm44) from Mus musculus (Mouse).